We begin with the raw amino-acid sequence, 384 residues long: BarH-like 2 homeobox protein (384 aa).

Disordered stretches follow at residues 1–134 (MTAM…APRT), 154–237 (CAPY…TAFS), and 364–384 (PGGQ…PHPR). Residues 119–134 (QSAAQQLGSAAAAPRT) are compositionally biased toward low complexity. Over residues 177–217 (ESFRPKLEQEDSKTKLDKREDSQSDIKCHGTKEEGDREITS) the composition is skewed to basic and acidic residues. Positions 229–288 (PRKARTAFSDHQLNQLERSFERQKYLSVQDRMDLAAALNLTDTQVKTWYQNRRTKWKRQT) form a DNA-binding region, homeobox.

Belongs to the BAR homeobox family. Expressed in the ganglion cell layer of the retina in the eye and in the ventral zone of the dorsal thalamus of the CNS.

Its subcellular location is the nucleus. Functionally, potential regulator of neural basic helix-loop-helix genes. It may down-regulate expression of ASCL1 and, within the thalamus, up-regulate NGN2, thereby regulating distinct patterns of neuronal differentiation. This is BarH-like 2 homeobox protein (Barhl2) from Rattus norvegicus (Rat).